A 316-amino-acid polypeptide reads, in one-letter code: ATP synthase gamma chain (316 aa).

It belongs to the ATPase gamma chain family. As to quaternary structure, F-type ATPases have 2 components, CF(1) - the catalytic core - and CF(0) - the membrane proton channel. CF(1) has five subunits: alpha(3), beta(3), gamma(1), delta(1), epsilon(1). CF(0) has three main subunits: a, b and c.

Its subcellular location is the cellular thylakoid membrane. In terms of biological role, produces ATP from ADP in the presence of a proton gradient across the membrane. The gamma chain is believed to be important in regulating ATPase activity and the flow of protons through the CF(0) complex. The sequence is that of ATP synthase gamma chain from Prochlorococcus marinus (strain NATL1A).